Here is a 250-residue protein sequence, read N- to C-terminus: Electron transfer flavoprotein subunit beta (250 aa).

Belongs to the ETF beta-subunit/FixA family. As to quaternary structure, heterodimer of an alpha and a beta subunit. FAD is required as a cofactor. It depends on AMP as a cofactor.

The protein localises to the mitochondrion matrix. Functionally, the electron transfer flavoprotein serves as a specific electron acceptor for several dehydrogenases, including five acyl-CoA dehydrogenases, glutaryl-CoA and sarcosine dehydrogenase. It transfers the electrons to the main mitochondrial respiratory chain via ETF-ubiquinone oxidoreductase (ETF dehydrogenase). The chain is Electron transfer flavoprotein subunit beta (etfb) from Dictyostelium discoideum (Social amoeba).